The sequence spans 73 residues: Translation initiation factor IF-1 (73 aa).

Residues Met1–Arg73 enclose the S1-like domain.

It belongs to the IF-1 family. As to quaternary structure, component of the 30S ribosomal translation pre-initiation complex which assembles on the 30S ribosome in the order IF-2 and IF-3, IF-1 and N-formylmethionyl-tRNA(fMet); mRNA recruitment can occur at any time during PIC assembly.

Its subcellular location is the cytoplasm. In terms of biological role, one of the essential components for the initiation of protein synthesis. Stabilizes the binding of IF-2 and IF-3 on the 30S subunit to which N-formylmethionyl-tRNA(fMet) subsequently binds. Helps modulate mRNA selection, yielding the 30S pre-initiation complex (PIC). Upon addition of the 50S ribosomal subunit IF-1, IF-2 and IF-3 are released leaving the mature 70S translation initiation complex. In Rhodopirellula baltica (strain DSM 10527 / NCIMB 13988 / SH1), this protein is Translation initiation factor IF-1.